We begin with the raw amino-acid sequence, 825 residues long: NT-3 growth factor receptor (825 aa).

Positions 1 to 31 (MDVSLCPAKCSFWRIFLLGSVWLDYVGSVLA) are cleaved as a signal peptide. Cystine bridges form between Cys-32/Cys-38 and Cys-36/Cys-45. At 32-429 (CPANCVCSKT…TVTHKPEEDT (398 aa)) the chain is on the extracellular side. Asn-68, Asn-72, and Asn-79 each carry an N-linked (GlcNAc...) asparagine glycan. LRR repeat units lie at residues 104 to 125 (GLQK…AFAK) and 128 to 149 (HLRY…LFQT). Residues Asn-133 and Asn-163 are each glycosylated (N-linked (GlcNAc...) asparagine). The LRRCT domain occupies 160–209 (NFFNCSCDIRWMQLWQEQGEARLDSQSLYCISADGSQLPLFRMNISQCDL). Disulfide bonds link Cys-164–Cys-189 and Cys-166–Cys-207. N-linked (GlcNAc...) asparagine glycans are attached at residues Asn-203, Asn-218, Asn-232, Asn-259, Asn-267, Asn-272, and Asn-294. 2 consecutive Ig-like C2-type domains span residues 210–300 (PEIS…VALT) and 309–382 (SLVE…IAKN). Cys-231 and Cys-284 are joined by a disulfide. Cys-320 and Cys-362 are disulfide-bonded. Residues Asn-375 and Asn-388 are each glycosylated (N-linked (GlcNAc...) asparagine). A helical membrane pass occupies residues 430–453 (FGVSIAVGLAAFACVLLVVLFIMI). The Cytoplasmic segment spans residues 454–825 (NKYGRRSKFG…ATPIYLDILG (372 aa)). A Phosphoserine modification is found at Ser-493. At Tyr-516 the chain carries Phosphotyrosine. A Protein kinase domain is found at 538–825 (IVLKRELGEG…ATPIYLDILG (288 aa)). Residues 544 to 552 (LGEGAFGKV) and Lys-572 each bind ATP. The active-site Proton acceptor is the Asp-679. Tyr-705, Tyr-709, and Tyr-710 each carry phosphotyrosine; by autocatalysis.

This sequence belongs to the protein kinase superfamily. Tyr protein kinase family. Insulin receptor subfamily. Exists in a dynamic equilibrium between monomeric (low affinity) and dimeric (high affinity) structures. Binds SH2B2. Interacts with SQSTM1 and KIDINS220. Interacts with PTPRS. Interacts with MAPK8IP3/JIP3. Ligand-mediated auto-phosphorylation. As to expression, isoform 2 expression is restricted to specific areas in adult brain. Isoform 3 transcripts are readily detected early during embryogenesis and are expressed predominantly in adult brain and gonads.

It is found in the membrane. The enzyme catalyses L-tyrosyl-[protein] + ATP = O-phospho-L-tyrosyl-[protein] + ADP + H(+). Functionally, receptor tyrosine kinase involved in nervous system and probably heart development. Upon binding of its ligand NTF3/neurotrophin-3, NTRK3 autophosphorylates and activates different signaling pathways, including the phosphatidylinositol 3-kinase/AKT and the MAPK pathways, that control cell survival and differentiation. This chain is NT-3 growth factor receptor (Ntrk3), found in Mus musculus (Mouse).